The sequence spans 278 residues: 4-deoxy-L-threo-5-hexosulose-uronate ketol-isomerase (278 aa).

Zn(2+)-binding residues include H196, H198, E203, and H245.

This sequence belongs to the KduI family. Zn(2+) serves as cofactor.

It carries out the reaction 5-dehydro-4-deoxy-D-glucuronate = 3-deoxy-D-glycero-2,5-hexodiulosonate. It participates in glycan metabolism; pectin degradation; 2-dehydro-3-deoxy-D-gluconate from pectin: step 4/5. Functionally, catalyzes the isomerization of 5-dehydro-4-deoxy-D-glucuronate to 3-deoxy-D-glycero-2,5-hexodiulosonate. This is 4-deoxy-L-threo-5-hexosulose-uronate ketol-isomerase from Enterobacter sp. (strain 638).